Reading from the N-terminus, the 1059-residue chain is Isoleucine--tRNA ligase (1059 aa).

A 'HIGH' region motif is present at residues 47 to 57 (PYTSGQMHLGT). The 'KMSKS' region motif lies at 606–610 (KMSKS). Position 609 (Lys609) interacts with ATP.

This sequence belongs to the class-I aminoacyl-tRNA synthetase family. IleS type 2 subfamily. Monomer. It depends on Zn(2+) as a cofactor.

Its subcellular location is the cytoplasm. The catalysed reaction is tRNA(Ile) + L-isoleucine + ATP = L-isoleucyl-tRNA(Ile) + AMP + diphosphate. Its function is as follows. Catalyzes the attachment of isoleucine to tRNA(Ile). As IleRS can inadvertently accommodate and process structurally similar amino acids such as valine, to avoid such errors it has two additional distinct tRNA(Ile)-dependent editing activities. One activity is designated as 'pretransfer' editing and involves the hydrolysis of activated Val-AMP. The other activity is designated 'posttransfer' editing and involves deacylation of mischarged Val-tRNA(Ile). The sequence is that of Isoleucine--tRNA ligase from Haloquadratum walsbyi (strain DSM 16790 / HBSQ001).